The sequence spans 325 residues: DNA-directed RNA polymerase subunit alpha (325 aa).

Positions 1-231 (MQTSLLKPKI…DQLSVFAALE (231 aa)) are alpha N-terminal domain (alpha-NTD). The segment at 246-325 (IDPILLRPVD…ENWPPAGLDK (80 aa)) is alpha C-terminal domain (alpha-CTD).

Belongs to the RNA polymerase alpha chain family. In terms of assembly, homodimer. The RNAP catalytic core consists of 2 alpha, 1 beta, 1 beta' and 1 omega subunit. When a sigma factor is associated with the core the holoenzyme is formed, which can initiate transcription.

It carries out the reaction RNA(n) + a ribonucleoside 5'-triphosphate = RNA(n+1) + diphosphate. DNA-dependent RNA polymerase catalyzes the transcription of DNA into RNA using the four ribonucleoside triphosphates as substrates. This is DNA-directed RNA polymerase subunit alpha from Burkholderia mallei (strain NCTC 10247).